Here is a 305-residue protein sequence, read N- to C-terminus: Superkiller complex protein 8 (305 aa).

The residue at position 1 (methionine 1) is an N-acetylmethionine. Threonine 2 carries the N-acetylthreonine; in WD repeat-containing protein 61, N-terminally processed modification. 7 WD repeats span residues 14-57, 62-101, 104-143, 146-187, 188-227, 230-269, and 272-305; these read AHDD…LELQ, GHQL…QMKS, AGPV…KEYS, TRGK…HTLE, GHAM…LAGT, GHAS…CIHT, and DHQD…DCPI.

The protein belongs to the SKI8 family. As to quaternary structure, component of the PAF1 complex, which consists of CDC73, PAF1, LEO1, CTR9, RTF1 and SKIC8. The PAF1 complex interacts with PHF5A. Within the PAF1 complex interacts directly with PHF5A. Component of the SKI complex which consists of SKIC2, SKIC3 and SKIC8.

It localises to the nucleus. It is found in the cytoplasm. Its function is as follows. Component of the PAF1 complex (PAF1C) which has multiple functions during transcription by RNA polymerase II and is implicated in regulation of development and maintenance of embryonic stem cell pluripotency. PAF1C associates with RNA polymerase II through interaction with POLR2A CTD non-phosphorylated and 'Ser-2'- and 'Ser-5'-phosphorylated forms and is involved in transcriptional elongation, acting both independently and synergistically with TCEA1 and in cooperation with the DSIF complex and HTATSF1. PAF1C is required for transcription of Hox and Wnt target genes. PAF1C is involved in hematopoiesis and stimulates transcriptional activity of KMT2A/MLL1; it promotes leukemogenesis through association with KMT2A/MLL1-rearranged oncoproteins, such as KMT2A/MLL1-MLLT3/AF9 and KMT2A/MLL1-MLLT1/ENL. PAF1C is involved in histone modifications such as ubiquitination of histone H2B and methylation on histone H3 'Lys-4' (H3K4me3). PAF1C recruits the RNF20/40 E3 ubiquitin-protein ligase complex and the E2 enzyme UBE2A or UBE2B to chromatin which mediate monoubiquitination of 'Lys-120' of histone H2B (H2BK120ub1); UB2A/B-mediated H2B ubiquitination is proposed to be coupled to transcription. PAF1C is involved in mRNA 3' end formation probably through association with cleavage and poly(A) factors. In case of infection by influenza A strain H3N2, PAF1C associates with viral NS1 protein, thereby regulating gene transcription. Required for mono- and trimethylation on histone H3 'Lys-4' (H3K4me3), dimethylation on histone H3 'Lys-79' (H3K4me3). Required for Hox gene transcription. Also acts as a component of the SKI complex, a multiprotein complex that assists the RNA-degrading exosome during the mRNA decay and quality-control pathways. The SKI complex catalyzes mRNA extraction from 80S ribosomal complexes in the 3'-5' direction and channels mRNA to the cytosolic exosome for degradation. SKI-mediated extraction of mRNA from stalled ribosomes allow binding of the Pelota-HBS1L complex and subsequent ribosome disassembly by ABCE1 for ribosome recycling. This is Superkiller complex protein 8 (Skic8) from Rattus norvegicus (Rat).